Consider the following 370-residue polypeptide: Small ribosomal subunit biogenesis GTPase RsgA 1 (370 aa).

Residues 97 to 255 enclose the CP-type G domain; the sequence is QTQLDRPPIA…LADTPGFNQP (159 aa). Residues 146 to 149 and 197 to 205 each bind GTP; these read NKSD and GPSGVGKSS. Cys280, Cys285, His287, and Cys293 together coordinate Zn(2+). Positions 325–370 are disordered; that stretch reads PESTLKLKTKGKGQSQYEPKLESKKYRRTSRRTQVQGLQDLYQEEE.

Belongs to the TRAFAC class YlqF/YawG GTPase family. RsgA subfamily. In terms of assembly, monomer. Associates with 30S ribosomal subunit, binds 16S rRNA. Zn(2+) is required as a cofactor.

It is found in the cytoplasm. Its function is as follows. One of several proteins that assist in the late maturation steps of the functional core of the 30S ribosomal subunit. Helps release RbfA from mature subunits. May play a role in the assembly of ribosomal proteins into the subunit. Circularly permuted GTPase that catalyzes slow GTP hydrolysis, GTPase activity is stimulated by the 30S ribosomal subunit. This is Small ribosomal subunit biogenesis GTPase RsgA 1 from Nostoc sp. (strain PCC 7120 / SAG 25.82 / UTEX 2576).